A 70-amino-acid polypeptide reads, in one-letter code: Putative defensin-like protein 280 (70 aa).

An N-terminal signal peptide occupies residues 1-23 (MASIKHFFLVFICVSVLLTSGLA). Cystine bridges form between C30/C53, C39/C65, and C43/C67.

It belongs to the DEFL family.

The protein localises to the secreted. This is Putative defensin-like protein 280 from Arabidopsis thaliana (Mouse-ear cress).